The sequence spans 230 residues: Interleukin-22 receptor subunit alpha-2 (230 aa).

Positions 1-20 (MMPKHCLLGLLIILLSSATE) are cleaved as a signal peptide. Fibronectin type-III domains are found at residues 29 to 128 (TPQK…TKLD) and 129 to 230 (PPVV…VHIP). 2 disulfides stabilise this stretch: Cys-77–Cys-85 and Cys-205–Cys-226.

Belongs to the type II cytokine receptor family. In terms of tissue distribution, highly expressed in lymph nodes and at lower levels in lung, spleen, and thymus. Not expressed in kidney, liver and heart.

It is found in the secreted. Functionally, receptor for IL22. Binds to IL22, prevents interaction with the functional IL-22R complex and blocks the activity of IL22 (in vitro). May play an important role as an IL22 antagonist in the regulation of inflammatory responses. This chain is Interleukin-22 receptor subunit alpha-2 (Il22ra2), found in Mus musculus (Mouse).